Here is a 155-residue protein sequence, read N- to C-terminus: 6,7-dimethyl-8-ribityllumazine synthase (155 aa).

Residues Phe23, 57-59 (AFE), and 83-85 (AVI) contribute to the 5-amino-6-(D-ribitylamino)uracil site. (2S)-2-hydroxy-3-oxobutyl phosphate is bound at residue 88–89 (AT). His91 (proton donor) is an active-site residue. Phe114 serves as a coordination point for 5-amino-6-(D-ribitylamino)uracil. Arg128 serves as a coordination point for (2S)-2-hydroxy-3-oxobutyl phosphate.

This sequence belongs to the DMRL synthase family.

It catalyses the reaction (2S)-2-hydroxy-3-oxobutyl phosphate + 5-amino-6-(D-ribitylamino)uracil = 6,7-dimethyl-8-(1-D-ribityl)lumazine + phosphate + 2 H2O + H(+). It participates in cofactor biosynthesis; riboflavin biosynthesis; riboflavin from 2-hydroxy-3-oxobutyl phosphate and 5-amino-6-(D-ribitylamino)uracil: step 1/2. In terms of biological role, catalyzes the formation of 6,7-dimethyl-8-ribityllumazine by condensation of 5-amino-6-(D-ribitylamino)uracil with 3,4-dihydroxy-2-butanone 4-phosphate. This is the penultimate step in the biosynthesis of riboflavin. The chain is 6,7-dimethyl-8-ribityllumazine synthase from Leptospira biflexa serovar Patoc (strain Patoc 1 / Ames).